The sequence spans 357 residues: Fulicin peptides (357 aa).

Residues 1–17 form the signal peptide; that stretch reads MQPTVLLILMTSCLTYQ. Residues 18 to 119 constitute a propeptide that is removed on maturation; the sequence is VIADKPKGNH…VDGSQGHLEP (102 aa). Asn123 carries the D-asparagine modification. Val126 carries the post-translational modification Valine amide. Residues 130–194 constitute a propeptide that is removed on maturation; that stretch reads NTLPEEAGSF…YNTMNEDEAS (65 aa). Val201 and Val209 each carry valine amide. 2 positions are modified to leucine amide: Leu217 and Leu226. Residues Ile233 and Ile242 each carry the isoleucine amide modification. Valine amide is present on residues Val250 and Val259. A propeptide spanning residues 263-298 is cleaved from the precursor; that stretch reads NQGVFTVSPSSTKISFDDNYLPYLSSVDAGDLSDVN. Leu305 is subject to Leucine amide. A propeptide spanning residues 311 to 357 is cleaved from the precursor; the sequence is TAEQDETSQRSNERLVALLQNTGFRKRLSRMLQNQRLVEHYPEFIGK.

As to expression, found in central ganglia and the ventricles and atria of the heart.

Its function is as follows. Potentiates tetanic contraction of the penis retractor muscle at very low concentrations, and also shows modulatory actions on the activity of the buccal and ventricular muscles and the central ganglionic neurons. This chain is Fulicin peptides, found in Lissachatina fulica (Giant African land snail).